Consider the following 785-residue polypeptide: Protein translocase subunit SecA 3 (785 aa).

ATP is bound by residues Q98, 116–120 (GEGKT), and D505.

The protein belongs to the SecA family. Monomer and homodimer. Part of the essential Sec protein translocation apparatus which comprises SecA, SecYEG and auxiliary proteins SecDF. Other proteins may also be involved.

The protein localises to the cell membrane. It is found in the cytoplasm. The catalysed reaction is ATP + H2O + cellular proteinSide 1 = ADP + phosphate + cellular proteinSide 2.. Functionally, part of the Sec protein translocase complex. Interacts with the SecYEG preprotein conducting channel. Has a central role in coupling the hydrolysis of ATP to the transfer of proteins into and across the cell membrane, serving as an ATP-driven molecular motor driving the stepwise translocation of polypeptide chains across the membrane. The chain is Protein translocase subunit SecA 3 from Mycolicibacterium vanbaalenii (strain DSM 7251 / JCM 13017 / BCRC 16820 / KCTC 9966 / NRRL B-24157 / PYR-1) (Mycobacterium vanbaalenii).